A 407-amino-acid chain; its full sequence is ETS domain-containing protein Elk-3 (407 aa).

Positions 5-85 (ITLWQFLLQL…IGQKFVYKFV (81 aa)) form a DNA-binding region, ETS. Lysine 92 is covalently cross-linked (Glycyl lysine isopeptide (Lys-Gly) (interchain with G-Cter in SUMO2)). Serine 115 is modified (phosphoserine). A Glycyl lysine isopeptide (Lys-Gly) (interchain with G-Cter in SUMO2) cross-link involves residue lysine 165. Disordered stretches follow at residues 234-253 (SSAS…SPLP) and 271-298 (LEPL…KGLE). The CTBP-binding motif motif lies at 273–277 (PLNLS). Position 396 is a phosphoserine (serine 396).

The protein belongs to the ETS family. In terms of assembly, interacts with CTBP1.

The protein resides in the nucleus. Functionally, may be a negative regulator of transcription, but can activate transcription when coexpressed with Ras, Src or Mos. Forms a ternary complex with the serum response factor and the ETS and SRF motifs of the Fos serum response element. The chain is ETS domain-containing protein Elk-3 (ELK3) from Homo sapiens (Human).